Here is an 892-residue protein sequence, read N- to C-terminus: DNA replication licensing factor mcm6 (892 aa).

Ser-96 and Ser-98 each carry phosphoserine. The 208-residue stretch at 426–633 folds into the MCM domain; the sequence is IYSRLTNSLA…VDRHLAKHIV (208 aa). 476-483 contributes to the ATP binding site; the sequence is GDPSTSKS. Positions 608 to 611 match the Arginine finger motif; it reads SRFD. Over residues 748 to 758 the composition is skewed to acidic residues; it reads EDDAEAQELEN. Residues 748–774 are disordered; that stretch reads EDDAEAQELENDNTNTTNGNDNVSSEE. Residues 759–769 show a composition bias toward low complexity; that stretch reads DNTNTTNGNDN.

This sequence belongs to the MCM family. As to quaternary structure, component of the mcm2-7 complex. The complex forms a toroidal hexameric ring with the proposed subunit order mcm2-mcm6-mcm4-mcm7-mcm3-mcm5. The heterodimers of mcm4/mcm6 and mcm3/mcm5 interact with mcm2 and mcm7. Interacts with sld3.

Its subcellular location is the nucleus. It carries out the reaction ATP + H2O = ADP + phosphate + H(+). Acts as a component of the mcm2-7 complex (mcm complex) which is the putative replicative helicase essential for 'once per cell cycle' DNA replication initiation and elongation in eukaryotic cells. The active ATPase sites in the mcm2-7 ring are formed through the interaction surfaces of two neighboring subunits such that a critical structure of a conserved arginine finger motif is provided in trans relative to the ATP-binding site of the Walker A box of the adjacent subunit. The six ATPase active sites, however, are likely to contribute differentially to the complex helicase activity. In Schizosaccharomyces pombe (strain 972 / ATCC 24843) (Fission yeast), this protein is DNA replication licensing factor mcm6 (mcm6).